A 475-amino-acid chain; its full sequence is Glycogen synthase (475 aa).

Residue Lys-15 coordinates ADP-alpha-D-glucose.

Belongs to the glycosyltransferase 1 family. Bacterial/plant glycogen synthase subfamily.

It carries out the reaction [(1-&gt;4)-alpha-D-glucosyl](n) + ADP-alpha-D-glucose = [(1-&gt;4)-alpha-D-glucosyl](n+1) + ADP + H(+). It participates in glycan biosynthesis; glycogen biosynthesis. Synthesizes alpha-1,4-glucan chains using ADP-glucose. The chain is Glycogen synthase from Chlamydia caviae (strain ATCC VR-813 / DSM 19441 / 03DC25 / GPIC) (Chlamydophila caviae).